Here is a 297-residue protein sequence, read N- to C-terminus: Lipoyl synthase (297 aa).

Positions 34, 39, 45, 60, 64, 67, and 273 each coordinate [4Fe-4S] cluster. Residues 46–262 form the Radical SAM core domain; the sequence is WNKRHATVMI…KYVAYSKGFL (217 aa).

This sequence belongs to the radical SAM superfamily. Lipoyl synthase family. [4Fe-4S] cluster serves as cofactor.

The protein localises to the cytoplasm. It catalyses the reaction [[Fe-S] cluster scaffold protein carrying a second [4Fe-4S](2+) cluster] + N(6)-octanoyl-L-lysyl-[protein] + 2 oxidized [2Fe-2S]-[ferredoxin] + 2 S-adenosyl-L-methionine + 4 H(+) = [[Fe-S] cluster scaffold protein] + N(6)-[(R)-dihydrolipoyl]-L-lysyl-[protein] + 4 Fe(3+) + 2 hydrogen sulfide + 2 5'-deoxyadenosine + 2 L-methionine + 2 reduced [2Fe-2S]-[ferredoxin]. It participates in protein modification; protein lipoylation via endogenous pathway; protein N(6)-(lipoyl)lysine from octanoyl-[acyl-carrier-protein]: step 2/2. Catalyzes the radical-mediated insertion of two sulfur atoms into the C-6 and C-8 positions of the octanoyl moiety bound to the lipoyl domains of lipoate-dependent enzymes, thereby converting the octanoylated domains into lipoylated derivatives. The sequence is that of Lipoyl synthase from Ehrlichia chaffeensis (strain ATCC CRL-10679 / Arkansas).